The following is a 337-amino-acid chain: F-box protein At2g27310 (337 aa).

In terms of domain architecture, F-box spans 10–58 (DSISTLHSDIIQTQILTRLDGPTLASTATTSSYLQTLCTEEKLWQELSI).

The sequence is that of F-box protein At2g27310 from Arabidopsis thaliana (Mouse-ear cress).